Here is a 309-residue protein sequence, read N- to C-terminus: Calponin-2 (309 aa).

Ser2 is modified (N-acetylserine). 2 positions are modified to N6-acetyllysine: Lys8 and Lys25. The Calponin-homology (CH) domain occupies 28-132; it reads PQKEAELRSW…SLLALAGKAK (105 aa). Phosphoserine is present on Ser138. Calponin-like repeat units lie at residues 166–191, 206–231, and 245–269; these read IGLQ…RHLY, ISLQ…RHIY, and MSLQ…RQIY. Residues 273-309 form a disordered region; it reads YCPQGPAADGAPAAAGDGPGPGEPSECPPYYQEEAGY. Residues 277 to 288 show a composition bias toward low complexity; that stretch reads GPAADGAPAAAG.

Belongs to the calponin family.

In terms of biological role, thin filament-associated protein that is implicated in the regulation and modulation of smooth muscle contraction. It is capable of binding to actin, calmodulin and tropomyosin. The interaction of calponin with actin inhibits the actomyosin Mg-ATPase activity. The chain is Calponin-2 (CNN2) from Bos taurus (Bovine).